The sequence spans 199 residues: Recombination protein RecR (199 aa).

Residues 58–73 (CQRCFHLSSEDLCNIC) form a C4-type zinc finger. Residues 81-175 (QTICVVADPR…RVTRIAFGLP (95 aa)) enclose the Toprim domain.

This sequence belongs to the RecR family.

Functionally, may play a role in DNA repair. It seems to be involved in an RecBC-independent recombinational process of DNA repair. It may act with RecF and RecO. The protein is Recombination protein RecR of Synechococcus elongatus (strain ATCC 33912 / PCC 7942 / FACHB-805) (Anacystis nidulans R2).